A 185-amino-acid chain; its full sequence is Large ribosomal subunit protein uL5 (185 aa).

Belongs to the universal ribosomal protein uL5 family. In terms of assembly, part of the 50S ribosomal subunit; part of the 5S rRNA/L5/L18/L25 subcomplex. Contacts the 5S rRNA and the P site tRNA. Forms a bridge to the 30S subunit in the 70S ribosome.

In terms of biological role, this is one of the proteins that bind and probably mediate the attachment of the 5S RNA into the large ribosomal subunit, where it forms part of the central protuberance. In the 70S ribosome it contacts protein S13 of the 30S subunit (bridge B1b), connecting the 2 subunits; this bridge is implicated in subunit movement. Contacts the P site tRNA; the 5S rRNA and some of its associated proteins might help stabilize positioning of ribosome-bound tRNAs. This Xanthobacter autotrophicus (strain ATCC BAA-1158 / Py2) protein is Large ribosomal subunit protein uL5.